Consider the following 266-residue polypeptide: Undecaprenyl-diphosphatase (266 aa).

8 helical membrane-spanning segments follow: residues 1–21 (MDTF…FLPI), 39–59 (QGLS…VIYF), 87–107 (WWII…KDFI), 114–134 (AEVI…ADKM), 149–169 (ALLI…RSGA), 183–203 (AAAR…AILV), 218–238 (ALIL…HYFL), and 246–266 (MTPF…FIFF).

Belongs to the UppP family.

The protein localises to the cell inner membrane. It carries out the reaction di-trans,octa-cis-undecaprenyl diphosphate + H2O = di-trans,octa-cis-undecaprenyl phosphate + phosphate + H(+). In terms of biological role, catalyzes the dephosphorylation of undecaprenyl diphosphate (UPP). Confers resistance to bacitracin. This Shewanella baltica (strain OS223) protein is Undecaprenyl-diphosphatase.